The chain runs to 620 residues: Magnesium-chelatase 67 kDa subunit (620 aa).

33–40 (STVGSGKS) serves as a coordination point for ATP. The disordered stretch occupies residues 272–322 (ATRMPEREPNPEEMAQDEPPPQEEQPQDEAEDQNAPPDEADSDADEEQEET). Over residues 296 to 322 (QPQDEAEDQNAPPDEADSDADEEQEET) the composition is skewed to acidic residues. A VWFA domain is found at 432-620 (LFIFMVDASG…AEQIVEAALS (189 aa)).

This sequence belongs to the Mg-chelatase subunits D/I family.

The enzyme catalyses protoporphyrin IX + Mg(2+) + ATP + H2O = Mg-protoporphyrin IX + ADP + phosphate + 3 H(+). The protein operates within porphyrin-containing compound metabolism; bacteriochlorophyll biosynthesis. In terms of biological role, involved in bacteriochlorophyll biosynthesis; introduces a magnesium ion into protoporphyrin IX to yield Mg-protoporphyrin IX. The polypeptide is Magnesium-chelatase 67 kDa subunit (bchD) (Chlorobaculum tepidum (strain ATCC 49652 / DSM 12025 / NBRC 103806 / TLS) (Chlorobium tepidum)).